Reading from the N-terminus, the 290-residue chain is Undecaprenyl-diphosphatase (290 aa).

A run of 8 helical transmembrane segments spans residues 1-21 (MFLL…LTEF), 48-68 (SAFT…AWVF), 101-121 (IHVL…DDLI), 125-145 (LFSV…MIIA), 161-181 (INYF…WPGF), 202-222 (SDFT…LSLL), 231-251 (AHIP…LIAI), and 266-286 (FAIY…GFGI).

Belongs to the UppP family.

It localises to the cell membrane. The enzyme catalyses di-trans,octa-cis-undecaprenyl diphosphate + H2O = di-trans,octa-cis-undecaprenyl phosphate + phosphate + H(+). In terms of biological role, catalyzes the dephosphorylation of undecaprenyl diphosphate (UPP). Confers resistance to bacitracin. This chain is Undecaprenyl-diphosphatase, found in Staphylococcus epidermidis (strain ATCC 35984 / DSM 28319 / BCRC 17069 / CCUG 31568 / BM 3577 / RP62A).